Consider the following 304-residue polypeptide: MIVRPQQHWLRRIFVWHGSVLSKISSRLLLNFLFSIAVIFMLPWYTHLGIKFTLAPFSILGVAIAIFLGFRNNAGYARYVEARKLWGQLMIASRSLLREVKTTLPDSASVREFARLQIAFAHCLRMTLRKQPQVEVLAHYLKTEDLQRVLASNSPANRILLIMGEWLAVQRRNGQLSDILFISLNDRLNDISAVLAGCERIAYTPIPFAYTLILHRTVYLFCIMLPFALVVDLHYMTPFISVLISYTFISLDCLAEELEDPFGTENNDLPLDAICNAIEIDLLQMNDEAEIPAKVLPDRHYQLT.

The next 4 helical transmembrane spans lie at 28–48 (LLLN…YTHL), 50–70 (IKFT…FLGF), 194–214 (VLAG…TLIL), and 220–240 (LFCI…TPFI).

The protein belongs to the anion channel-forming bestrophin (TC 1.A.46) family.

The protein localises to the cell membrane. This Escherichia coli O157:H7 protein is Voltage-dependent anion channel-forming protein YneE (yneE).